The sequence spans 340 residues: KH domain-containing RNA-binding protein QKI (340 aa).

Positions 87–153 constitute a KH domain; that stretch reads YVPVKEYPDF…WEHLNEDLHV (67 aa). Positions 275 to 278 match the SH3-binding motif; the sequence is PPGP. The Nuclear localization signal motif lies at 323 to 329; sequence RVHPYQR.

It belongs to the quaking family. As to quaternary structure, homodimer; does not require RNA to homodimerize.

Its subcellular location is the cytoplasm. It is found in the nucleus. Its function is as follows. RNA reader protein, which recognizes and binds specific RNAs, thereby regulating RNA metabolic processes, such as pre-mRNA splicing, circular RNA (circRNA) formation, mRNA export, mRNA stability and/or translation. Involved in various cellular processes, such as mRNA storage into stress granules, apoptosis, interferon response, glial cell fate and development. Binds to the 5'-NACUAAY-N(1,20)-UAAY-3' RNA core sequence. Acts as a mRNA modification reader that specifically recognizes and binds mRNA transcripts modified by internal N(7)-methylguanine (m7G). Promotes the formation of circular RNAs (circRNAs): acts by binding to sites flanking circRNA-forming exons. CircRNAs are produced by back-splicing circularization of pre-mRNAs. Required to protect and promote stability of mRNAs which promotes oligodendrocyte differentiation. Acts as an important regulator of muscle development. The protein is KH domain-containing RNA-binding protein QKI of Gallus gallus (Chicken).